Consider the following 746-residue polypeptide: Centromere protein I (746 aa).

Residues 1 to 24 are disordered; the sequence is MATQRVTRNSQQQNRISQGSNSRQ.

Belongs to the CENP-I/CTF3 family. As to quaternary structure, component of the CENPA-CAD complex, composed of CENPI, CENPK, CENPL, CENPO, CENPP, CENPQ, CENPR and CENPS. The CENPA-CAD complex interacts with the CENPA-NAC complex, at least composed of CENPA, CENPC, CENPH, CENPM, CENPN, CENPT and CENPU. Interacts with SENP6. Sumoylated. Sumoylated form can be polyubiquitinated by RNF4, leading to its degradation. Desumoylation by SENP6 prevents its degradation.

It localises to the nucleus. The protein localises to the chromosome. Its subcellular location is the centromere. Component of the CENPA-CAD (nucleosome distal) complex, a complex recruited to centromeres which is involved in assembly of kinetochore proteins, mitotic progression and chromosome segregation. May be involved in incorporation of newly synthesized CENPA into centromeres via its interaction with the CENPA-NAC complex. Required for the localization of CENPF, MAD1L1 and MAD2 (MAD2L1 or MAD2L2) to kinetochores. Involved in the response of gonadal tissues to follicle-stimulating hormone. This Mus musculus (Mouse) protein is Centromere protein I (Cenpi).